A 337-amino-acid polypeptide reads, in one-letter code: Fructose-1,6-bisphosphatase class 1 (337 aa).

Mg(2+)-binding residues include Glu-89, Asp-112, Leu-114, and Asp-115. Residues 115–118 (DGSS), Asn-208, Tyr-241, and Lys-271 contribute to the substrate site. Residue Glu-277 participates in Mg(2+) binding.

The protein belongs to the FBPase class 1 family. Homotetramer. Mg(2+) serves as cofactor.

The protein localises to the cytoplasm. The catalysed reaction is beta-D-fructose 1,6-bisphosphate + H2O = beta-D-fructose 6-phosphate + phosphate. It participates in carbohydrate biosynthesis; gluconeogenesis. This chain is Fructose-1,6-bisphosphatase class 1, found in Yersinia pestis bv. Antiqua (strain Antiqua).